A 432-amino-acid polypeptide reads, in one-letter code: MIDVDALSKKYPAIKQMQAYEPIFWKNLNYKKEAELPVGVEHIFDAEARFQRFAPYFEVAFPETLPTHGILESPLLKMDKMKAVLNAEAQNQVKGDLYLKADNYLPISGSIKSRGGIYEVLKFAEKVAMKHGEIVYGDNYAKLNEPRFKDLFGQYGIVVGSTGNLGLSIGIVACKLGFRTSVHMSSDAAQWKKDMLREKGVNVVEYNDNFTHAITEARKSAEADPMAYFIDDEGSYDLFLGYSVAAVRLQAQLKAQNIKVDAEHPLFVYLPAGVGGSPSGVAFGLKKIIGENVHPIFAEPTHIPSVSLGMMTGLNDQISVYDAGIDGVTKADGLAVGRPSRIAGKMMDTLLYGIQTFDDQKMMKNVAELHDSENVDVEPSAASGFTILDDVQAQLEQDYPMENASHIVWATGGSMVPKNDMDQYVAEGHQVK.

K112 is subject to N6-(pyridoxal phosphate)lysine.

The protein belongs to the serine/threonine dehydratase family. DsdA subfamily. The cofactor is pyridoxal 5'-phosphate.

It catalyses the reaction D-serine = pyruvate + NH4(+). The polypeptide is Probable D-serine dehydratase (Pediococcus pentosaceus (strain ATCC 25745 / CCUG 21536 / LMG 10740 / 183-1w)).